A 231-amino-acid polypeptide reads, in one-letter code: Probable cell wall protein ARB_06477 (231 aa).

A signal peptide spans Met1–Ala17. Residues Thr107–Pro206 are disordered. A compositionally biased stretch (low complexity) spans Thr121–Gly204. Residue Ser203 is the site of GPI-anchor amidated serine attachment. Positions Gly204–Leu231 are cleaved as a propeptide — removed in mature form.

This sequence belongs to the SRP1/TIP1 family. In terms of processing, the GPI-anchor is attached to the protein in the endoplasmic reticulum and serves to target the protein to the cell surface. There, the glucosamine-inositol phospholipid moiety is cleaved off and the GPI-modified mannoprotein is covalently attached via its lipidless GPI glycan remnant to the 1,6-beta-glucan of the outer cell wall layer.

The protein localises to the cell membrane. The protein resides in the secreted. It is found in the cell wall. Probable component of the cell wall. The polypeptide is Probable cell wall protein ARB_06477 (Arthroderma benhamiae (strain ATCC MYA-4681 / CBS 112371) (Trichophyton mentagrophytes)).